Consider the following 527-residue polypeptide: Tubulin-specific chaperone E (527 aa).

Ser2 is modified (N-acetylserine). The region spanning 27–71 is the CAP-Gly domain; it reads GVVPPVAGPWLGVEWDNPERGKHDGSHEGTVYFKCRHPTGGSFIR. LRR repeat units follow at residues 154-175, 180-200, 205-226, 230-252, 253-274, 278-299, and 308-329; these read NIRKVDLSKNLLSSWDEVIHIA, HLEVLNVSENKLKFPSGSVLT, VLKVLVLNQTGITWAEVLRCVA, GLEELYLESNNIFISERPTDVLQ, TVKLLDLSSNQLIDENQLYLIA, RLEQLILSDTGISSLHFPDAGI, and SLKYLVVNDNQISQWSFFNELE. The 43-residue stretch at 342 to 384 folds into the LRRCT domain; that stretch reads NPLTKEDKEAETARLLIIASIGQLKTLNKCEILPEERRRAELD. At Lys463 the chain carries N6-acetyllysine. At Ser495 the chain carries Phosphoserine.

Belongs to the TBCE family. Supercomplex made of cofactors A to E. Cofactors A and D function by capturing and stabilizing tubulin in a quasi-native conformation. Cofactor E binds to the cofactor D-tubulin complex; interaction with cofactor C then causes the release of tubulin polypeptides that are committed to the native state. Cofactors B and E can form a heterodimer which binds to alpha-tubulin and enhances their ability to dissociate tubulin heterodimers. Interacts with TBCD.

Its subcellular location is the cytoplasm. The protein resides in the cytoskeleton. Tubulin-folding protein; involved in the second step of the tubulin folding pathway and in the regulation of tubulin heterodimer dissociation. Required for correct organization of microtubule cytoskeleton and mitotic splindle, and maintenance of the neuronal microtubule network. This is Tubulin-specific chaperone E (TBCE) from Homo sapiens (Human).